Reading from the N-terminus, the 289-residue chain is Toxin tox21A (289 aa).

A signal peptide spans 1–14 (MNLYFLFFISTILA). A propeptide spanning residues 15 to 27 (AKPFNSFNKTSLI) is cleaved from the precursor. The disordered stretch occupies residues 270 to 289 (DKDITVHENAGDPKSDSRRC).

In terms of processing, contains several disulfide bonds. As to expression, posterior glands which appear to be connected with the stylet through a series of ducts.

It is found in the secreted. Its function is as follows. Has contracting-paralyzing activity in insect larvae. In Pyemotes tritici (Straw itch mite), this protein is Toxin tox21A.